We begin with the raw amino-acid sequence, 410 residues long: Monoglucosyldiacylglycerol epimerase (410 aa).

The N-terminal stretch at 1-14 (MAMAWLMGLGLALA) is a signal peptide. Transmembrane regions (helical) follow at residues 71–91 (ALVMLAFGIWPPLLTWMWQGF) and 96–116 (LILAASAGMVYTLGFLLSAIA). Y320 functions as the Proton acceptor in the catalytic mechanism. Residues 380–400 (IIVTINPITFIAFPVKEFFVS) traverse the membrane as a helical segment.

The protein belongs to the short-chain dehydrogenases/reductases (SDR) family.

It is found in the membrane. The enzyme catalyses a 1,2-diacyl-3-O-(beta-D-glucopyranosyl)-sn-glycerol = a 1,2-diacyl-3-O-(beta-D-galactosyl)-sn-glycerol. Involved in the biosynthesis of galactolipids found in the photosynthetic membranes. Catalyzes the isomerization of monoglucosyldiacylglycerol (GlcDG) to yield monogalactosyldiacylglycerol (MGDG). This is Monoglucosyldiacylglycerol epimerase from Synechocystis sp. (strain ATCC 27184 / PCC 6803 / Kazusa).